The chain runs to 55 residues: Large ribosomal subunit protein bL33 (55 aa).

The protein belongs to the bacterial ribosomal protein bL33 family.

This is Large ribosomal subunit protein bL33 from Buchnera aphidicola subsp. Acyrthosiphon pisum (strain 5A).